Reading from the N-terminus, the 306-residue chain is UDP-3-O-acyl-N-acetylglucosamine deacetylase (306 aa).

Positions 79, 238, and 242 each coordinate Zn(2+). The active-site Proton donor is H265.

It belongs to the LpxC family. Requires Zn(2+) as cofactor.

The catalysed reaction is a UDP-3-O-[(3R)-3-hydroxyacyl]-N-acetyl-alpha-D-glucosamine + H2O = a UDP-3-O-[(3R)-3-hydroxyacyl]-alpha-D-glucosamine + acetate. Its pathway is glycolipid biosynthesis; lipid IV(A) biosynthesis; lipid IV(A) from (3R)-3-hydroxytetradecanoyl-[acyl-carrier-protein] and UDP-N-acetyl-alpha-D-glucosamine: step 2/6. Catalyzes the hydrolysis of UDP-3-O-myristoyl-N-acetylglucosamine to form UDP-3-O-myristoylglucosamine and acetate, the committed step in lipid A biosynthesis. This is UDP-3-O-acyl-N-acetylglucosamine deacetylase from Shewanella halifaxensis (strain HAW-EB4).